A 176-amino-acid polypeptide reads, in one-letter code: Calcineurin subunit B type 2 (176 aa).

Gly2 carries the N-myristoyl glycine lipid modification. 4 EF-hand domains span residues 18 to 53 (DEIKRLGRSFKKMDLDKSGSLSVDEFMSLPELQQNP), 57 to 85 (RVIDIFDTDGNGEVDFREFIVGTSQFSVK), 87 to 122 (DEEQKLRFAFRIYDMDNDGFISNGELFQVLKMMVGN), and 128 to 163 (QLQQLVDKSILVLDKDGDGRISFEEFRDVVRTMEIH). 14 residues coordinate Ca(2+): Asp31, Asp33, Ser35, Ser37, Glu42, Asp63, Asp65, Asn67, Glu69, Glu74, Asp100, Asp102, Asp104, and Glu111. The tract at residues 131–136 (QLVDKS) is calcineurin A binding. Ca(2+) contacts are provided by Asp141, Asp143, Asp145, Arg147, and Glu152.

It belongs to the calcineurin regulatory subunit family. As to quaternary structure, forms a complex composed of a calmodulin-dependent catalytic subunit (also known as calcineurin A) and a regulatory Ca(2+)-binding subunit (also known as calcineurin B). There are three catalytic subunits, each encoded by a separate gene (PPP3CA, PPP3CB, and PPP3CC) and two regulatory subunits which are also encoded by separate genes (PPP3R1 and PPP3R2). Interacts with SPATA33 (via PQIIIT motif). As to expression, testis specific.

The protein resides in the mitochondrion. In terms of biological role, regulatory subunit of calcineurin, a calcium-dependent, calmodulin stimulated protein phosphatase. Confers calcium sensitivity. This chain is Calcineurin subunit B type 2 (Ppp3r2), found in Rattus norvegicus (Rat).